The chain runs to 358 residues: Triacylglycerol lipase (358 aa).

An N-terminal signal peptide occupies residues 1 to 39 (MVRSMRSRVAARAVAWALAVMPLAGAAGLTMAASPAAVA). An AB hydrolase-1 domain is found at 48–327 (YPVILVHGLA…TSYHWNHLDE (280 aa)). Leucine 56 is a substrate binding site. Serine 126 acts as the Nucleophile in catalysis. Residue glutamine 127 coordinates substrate. Residues cysteine 229 and cysteine 308 are joined by a disulfide bond. Residue aspartate 280 participates in Ca(2+) binding. Residues aspartate 302 and histidine 324 each act as charge relay system in the active site. Residues aspartate 326, glutamine 330, and valine 334 each contribute to the Ca(2+) site.

It belongs to the AB hydrolase superfamily. Pseudomonas lipase family. As to quaternary structure, monomer. Interacts with lipase-specific foldase Lif. Ca(2+) serves as cofactor.

It is found in the secreted. The enzyme catalyses a triacylglycerol + H2O = a diacylglycerol + a fatty acid + H(+). In terms of biological role, catalyzes the hydrolysis of triacylglycerol. In Burkholderia plantarii, this protein is Triacylglycerol lipase.